The following is a 218-amino-acid chain: MQPMLKYCGNRSLEDVQAAATSKADYLGFVFAKSKRQVTVNEVTRWLDQVNVNGKKLVALFVNEPIDQIVNVVKQGPFDVIQCHGTENRDYIMTLKERIDLPVWKAIHHSGQGLQMMRALEGVVEAFVVDAKVEGQWGGTGQSFDWHVVPLYLQEGKRQQVPVFIAGGINPHNVELLLPYGPCGIDISSGIEENGQKSSAKICQIEKKVLGDDSHISR.

The protein belongs to the TrpF family.

The catalysed reaction is N-(5-phospho-beta-D-ribosyl)anthranilate = 1-(2-carboxyphenylamino)-1-deoxy-D-ribulose 5-phosphate. The protein operates within amino-acid biosynthesis; L-tryptophan biosynthesis; L-tryptophan from chorismate: step 3/5. The polypeptide is N-(5'-phosphoribosyl)anthranilate isomerase (Halalkalibacterium halodurans (strain ATCC BAA-125 / DSM 18197 / FERM 7344 / JCM 9153 / C-125) (Bacillus halodurans)).